The primary structure comprises 400 residues: Argininosuccinate synthase (400 aa).

Residues 10–18 (AYSGGVDTS) and A38 contribute to the ATP site. Position 89 (Y89) interacts with L-citrulline. G119 contributes to the ATP binding site. Positions 121, 125, and 126 each coordinate L-aspartate. Residue N125 coordinates L-citrulline. Positions 129, 177, 186, 262, and 274 each coordinate L-citrulline.

It belongs to the argininosuccinate synthase family. Type 1 subfamily. In terms of assembly, homotetramer.

The protein resides in the cytoplasm. The catalysed reaction is L-citrulline + L-aspartate + ATP = 2-(N(omega)-L-arginino)succinate + AMP + diphosphate + H(+). It participates in amino-acid biosynthesis; L-arginine biosynthesis; L-arginine from L-ornithine and carbamoyl phosphate: step 2/3. The protein is Argininosuccinate synthase of Prochlorococcus marinus (strain NATL2A).